A 222-amino-acid polypeptide reads, in one-letter code: Proteoglycan 3 (222 aa).

Residues 1–17 (MKQPLILSFLLLGMVSA) form the signal peptide. Residues 27 to 46 (NPKREESLKQEADGSREQGR) show a composition bias toward basic and acidic residues. Residues 27 to 100 (NPKREESLKQ…PKEEDTTHFQ (74 aa)) are disordered. Positions 71–81 (FEDEEAMESDP) are enriched in acidic residues. Residues 83–97 (ALNKDSACPKEEDTT) show a composition bias toward basic and acidic residues. Positions 105–221 (CKSCNYVLVR…CKSHLPFICS (117 aa)) constitute a C-type lectin domain. 2 disulfides stabilise this stretch: Cys-126/Cys-220 and Cys-197/Cys-212.

As to expression, expressed in bone marrow, spleen, and thymus. Not detected in heart, liver or lung.

Functionally, possesses similar cytotoxic and cytostimulatory activities to PRG2/MBP. The polypeptide is Proteoglycan 3 (Mus musculus (Mouse)).